Reading from the N-terminus, the 60-residue chain is Anionic antimicrobial peptide 2 (60 aa).

As to expression, hemolymph.

Its subcellular location is the secreted. Antimicrobial protein. Has antibacterial activity against the Gram-positive bacteria M.luteus (MIC=86.6 uM), L.monocytogenes (MIC=86.6 uM), and S.lutea (MIC=86.6 uM). Lacks antibacterial activity against the Gram-positive bacteria B.circulans and S.aureus, and the Gram-negative bacteria E.coli D31, E.coli ATCC 25922, and S.typhimurium. Has antifungal activity against P.pastoris (MIC=86.6 uM) and P.stipitis (MIC=90.9 uM), but lacks antifungal activity against A.niger, C.albicans, C.albidus, C.fructus, C.wickerhamii, F.oxysporum, S.cerevisiae, S.pombe, T.harzianum, and Z.marxianus. This Galleria mellonella (Greater wax moth) protein is Anionic antimicrobial peptide 2.